The chain runs to 611 residues: Alpha-1,2-mannosyltransferase ALG9 (611 aa).

Over residues 1-10 the composition is skewed to basic residues; the sequence is MASRRARQRL. The disordered stretch occupies residues 1 to 51; that stretch reads MASRRARQRLKGGGGGGGGGGDAGPAAEKLEQLGSREAGAEPRPESGNKAG. Residues 1-135 lie on the Lumenal side of the membrane; sequence MASRRARQRL…FHARILQTNK (135 aa). Residues 11 to 23 show a composition bias toward gly residues; that stretch reads KGGGGGGGGGGDA. An N-linked (GlcNAc...) asparagine glycan is attached at asparagine 77. Residues 136 to 156 form a helical membrane-spanning segment; the sequence is ILVFYFLRCLLAFVSCVCELY. Residues 157-171 are Cytoplasmic-facing; it reads FYKAVCKKFGLHVSR. Residues 172-192 traverse the membrane as a helical segment; it reads MMLAFLVLSTGMFCSSSAFLP. Residues 193 to 213 are Lumenal-facing; sequence SSFCMYTTLIAMTGWYMDKTP. Residues 214–234 traverse the membrane as a helical segment; it reads IAVLGVAAGAILGWPFSAALG. Topologically, residues 235–249 are cytoplasmic; that stretch reads LPIAFDLLARKHRWK. Residues 250–270 form a helical membrane-spanning segment; it reads SFLLWSLVALALFLVPVVVID. Residues 271 to 310 lie on the Lumenal side of the membrane; sequence SYYYGKLVVAPLNIVLYNVFTSHGPDLYGTEPWYFYLING. A helical transmembrane segment spans residues 311-331; it reads FLNFNVAFALALLVLPLTFLM. Residues 332 to 342 are Cytoplasmic-facing; sequence EYLLQRFHVQN. The chain crosses the membrane as a helical span at residues 343–363; the sequence is LGHPYWLTLAPMYIWFIIFFI. Topologically, residues 364–370 are lumenal; that stretch reads QPHKEER. Residues 371-391 traverse the membrane as a helical segment; the sequence is FLFPVYPLICLCGAVALSALQ. Topologically, residues 392–405 are cytoplasmic; that stretch reads KCYHFVFQRYRLEH. Residues 406–426 traverse the membrane as a helical segment; sequence YTVTSNWLALGTVFLFGLLSF. The Lumenal portion of the chain corresponds to 427 to 611; the sequence is SRSVALFRGY…AKPSRKKSGG (185 aa). N-linked (GlcNAc...) asparagine glycans are attached at residues asparagine 550 and asparagine 593.

It belongs to the glycosyltransferase 22 family.

Its subcellular location is the endoplasmic reticulum membrane. The catalysed reaction is an alpha-D-Man-(1-&gt;2)-alpha-D-Man-(1-&gt;2)-alpha-D-Man-(1-&gt;3)-[alpha-D-Man-(1-&gt;3)-alpha-D-Man-(1-&gt;6)]-beta-D-Man-(1-&gt;4)-beta-D-GlcNAc-(1-&gt;4)-alpha-D-GlcNAc-diphospho-di-trans,poly-cis-dolichol + a di-trans,poly-cis-dolichyl beta-D-mannosyl phosphate = an alpha-D-Man-(1-&gt;2)-alpha-D-Man-(1-&gt;2)-alpha-D-Man-(1-&gt;3)-[alpha-D-Man-(1-&gt;2)-alpha-D-Man-(1-&gt;3)-alpha-D-Man-(1-&gt;6)]-beta-D-Man-(1-&gt;4)-beta-D-GlcNAc-(1-&gt;4)-alpha-D-GlcNAc-diphospho-di-trans,poly-cis-dolichol + a di-trans,poly-cis-dolichyl phosphate + H(+). It carries out the reaction an alpha-D-Man-(1-&gt;2)-alpha-D-Man-(1-&gt;2)-alpha-D-Man-(1-&gt;3)-[alpha-D-Man-(1-&gt;2)-alpha-D-Man-(1-&gt;3)-[alpha-D-Man-(1-&gt;6)]-alpha-D-Man-(1-&gt;6)]-beta-D-Man-(1-&gt;4)-beta-D-GlcNAc-(1-&gt;4)-alpha-D-GlcNAc-diphospho-di-trans,poly-cis-dolichol + a di-trans,poly-cis-dolichyl beta-D-mannosyl phosphate = an alpha-D-Man-(1-&gt;2)-alpha-D-Man-(1-&gt;2)-alpha-D-Man-(1-&gt;3)-[alpha-D-Man-(1-&gt;2)-alpha-D-Man-(1-&gt;3)-[alpha-D-Man-(1-&gt;2)-alpha-D-Man-(1-&gt;6)]-alpha-D-Man-(1-&gt;6)]-beta-D-Man-(1-&gt;4)-beta-D-GlcNAc-(1-&gt;4)-alpha-D-GlcNAc-diphospho-di-trans,poly-cis-dolichol + a di-trans,poly-cis-dolichyl phosphate + H(+). It functions in the pathway protein modification; protein glycosylation. In terms of biological role, mannosyltransferase that operates in the biosynthetic pathway of dolichol-linked oligosaccharides, the glycan precursors employed in protein asparagine (N)-glycosylation. The assembly of dolichol-linked oligosaccharides begins on the cytosolic side of the endoplasmic reticulum membrane and finishes in its lumen. The sequential addition of sugars to dolichol pyrophosphate produces dolichol-linked oligosaccharides containing fourteen sugars, including two GlcNAcs, nine mannoses and three glucoses. Once assembled, the oligosaccharide is transferred from the lipid to nascent proteins by oligosaccharyltransferases. In the lumen of the endoplasmic reticulum, catalyzes the addition of the seventh and ninth alpha-1,2-linked mannose residues to Man(6)GlcNAc(2)-PP-dolichol and Man(8)GlcNAc(2)-PP-dolichol respectively. The polypeptide is Alpha-1,2-mannosyltransferase ALG9 (Mus musculus (Mouse)).